Reading from the N-terminus, the 144-residue chain is uncharacterized protein (144 aa).

An N-terminal signal peptide occupies residues 1 to 23 (MVIPLRNKYGILFLIAVCIMVSG). Positions 119 to 144 (QNGQRKTMTRIESKTGREEKDEKSKS) are disordered. Residues 127–144 (TRIESKTGREEKDEKSKS) are compositionally biased toward basic and acidic residues.

This is an uncharacterized protein from Bacillus subtilis (strain 168).